We begin with the raw amino-acid sequence, 218 residues long: Capsid protein (218 aa).

Position 1 is an N-acetylmethionine; by host (methionine 1). Positions methionine 1–alanine 28 are disordered. Residues arginine 11–serine 21 are compositionally biased toward basic residues.

The protein belongs to the cucumovirus capsid protein family.

It localises to the virion. Functionally, capsid protein. Probably binds RNA and plays a role in packaging. The protein is Capsid protein of Cucumis sativus (Cucumber).